Consider the following 227-residue polypeptide: Albumin-2 (227 aa).

Hemopexin repeat units follow at residues 3–46 (PGYI…GPTP), 61–111 (SYGI…FPFF), 117–165 (ESGI…YPCF), and 171–221 (ESGA…WPSL). Residues N7 and D65 each contribute to the Ca(2+) site. Position 118 (S118) interacts with spermine. Ca(2+) is bound by residues D121 and D175.

Monomer and homodimer. Dimers are prevalent in solution.

The protein localises to the cytoplasm. The protein resides in the cytosol. Functionally, may play a role in response to oxidative stress and polyamine biosynthesis. The monomeric form binds one hemin per monomer. In the dimeric form, about half of the dimers bind one molecule of spermine each under physiological conditions. Ligand binding is mutually exclusive as binding of hemin leads to dissociation of the dimer. The sequence is that of Albumin-2 from Lathyrus sativus (White vetchling).